The primary structure comprises 380 residues: Queuine tRNA-ribosyltransferase (380 aa).

Aspartate 96 serves as the catalytic Proton acceptor. Substrate contacts are provided by residues 96-100, aspartate 150, glutamine 193, and glycine 220; that span reads DSGGF. An RNA binding region spans residues 251–257; the sequence is GVGAPDS. The active-site Nucleophile is aspartate 270. The segment at 275-279 is RNA binding; important for wobble base 34 recognition; sequence TRIAR. Zn(2+) is bound by residues cysteine 308, cysteine 310, cysteine 313, and histidine 339.

It belongs to the queuine tRNA-ribosyltransferase family. In terms of assembly, homodimer. Within each dimer, one monomer is responsible for RNA recognition and catalysis, while the other monomer binds to the replacement base PreQ1. Zn(2+) is required as a cofactor.

It catalyses the reaction 7-aminomethyl-7-carbaguanine + guanosine(34) in tRNA = 7-aminomethyl-7-carbaguanosine(34) in tRNA + guanine. The protein operates within tRNA modification; tRNA-queuosine biosynthesis. Catalyzes the base-exchange of a guanine (G) residue with the queuine precursor 7-aminomethyl-7-deazaguanine (PreQ1) at position 34 (anticodon wobble position) in tRNAs with GU(N) anticodons (tRNA-Asp, -Asn, -His and -Tyr). Catalysis occurs through a double-displacement mechanism. The nucleophile active site attacks the C1' of nucleotide 34 to detach the guanine base from the RNA, forming a covalent enzyme-RNA intermediate. The proton acceptor active site deprotonates the incoming PreQ1, allowing a nucleophilic attack on the C1' of the ribose to form the product. After dissociation, two additional enzymatic reactions on the tRNA convert PreQ1 to queuine (Q), resulting in the hypermodified nucleoside queuosine (7-(((4,5-cis-dihydroxy-2-cyclopenten-1-yl)amino)methyl)-7-deazaguanosine). This chain is Queuine tRNA-ribosyltransferase, found in Streptococcus pyogenes serotype M6 (strain ATCC BAA-946 / MGAS10394).